Reading from the N-terminus, the 666-residue chain is Spartin (666 aa).

An N-acetylmethionine modification is found at M1. The MIT domain occupies 16-94 (IREAYKKAFL…LQNVRTRLEI (79 aa)). Residues 124–156 (EKLPEPQSFSSAPQHAEVNGNTSTPSAGAVAAP) are disordered. Positions 146–156 (STPSAGAVAAP) are enriched in low complexity. The interval 190-380 (DSGEFSSVGE…QLDQGNKDVR (191 aa)) is ubiquitin-binding region (UBR) domain. The short motif at 193 to 200 (EFSSVGEE) is the LC3-interacting region (LIR); mediates interaction with MAP1LC3A AND MAP1LC3C element. Residues 344–398 (EENEFQIPGRTRPSSDQLKEASGTDVKQLDQGNKDVRHKGKRGKRAKDTSSEEVN) form a disordered region. K362 participates in a covalent cross-link: Glycyl lysine isopeptide (Lys-Gly) (interchain with G-Cter in ubiquitin). Positions 379 to 388 (VRHKGKRGKR) are enriched in basic residues. Positions 427–611 (ILSGASWVSW…YNINNIGIKA (185 aa)) constitute a Senescence domain. A required for localization to lipid droplets region spans residues 431–503 (ASWVSWGLVK…LVDGVCTVAN (73 aa)). S470 carries the phosphoserine modification. The segment at 636–666 (RENQEGAANVNVRGEKDEQTKEVKEAKKKDK) is disordered. A compositionally biased stretch (basic and acidic residues) spans 648–666 (RGEKDEQTKEVKEAKKKDK).

As to quaternary structure, interacts with ITCH and WWP1. Interacts (via MIT domain) with IST1; leading to the recruitment of SPART to midbodies. Interacts with MAP1LC3A and MAP1LC3C. In terms of processing, ubiquitinated; ubiquitination does not require ITCH and WWP1. As to expression, ubiquitously expressed, with highest levels of expression detected in adipose tissue.

The protein resides in the cytoplasm. Its subcellular location is the midbody. The protein localises to the lipid droplet. Functionally, lipophagy receptor that plays an important role in lipid droplet (LD) turnover in motor neurons. Localizes to LDs and interacts with components of the autophagy machinery, such as MAP1LC3A/C proteins to deliver LDs to autophagosomes for degradation via lipophagy. Lipid transfer protein required for lipid droplet degradation, including by lipophagy. Can bind and transfer all lipid species found in lipid droplets, from phospholipids to triglycerides and sterol esters but the direction of lipid transfer by spartin and its cargos are unknown. May be implicated in endosomal trafficking, or microtubule dynamics, or both. Participates in cytokinesis. The chain is Spartin from Homo sapiens (Human).